A 66-amino-acid polypeptide reads, in one-letter code: Large ribosomal subunit protein uL29 (66 aa).

The protein belongs to the universal ribosomal protein uL29 family.

The chain is Large ribosomal subunit protein uL29 from Borreliella afzelii (strain PKo) (Borrelia afzelii).